The primary structure comprises 365 residues: Peptide chain release factor 2 (365 aa).

An N5-methylglutamine modification is found at glutamine 252.

This sequence belongs to the prokaryotic/mitochondrial release factor family. Methylated by PrmC. Methylation increases the termination efficiency of RF2.

It localises to the cytoplasm. Functionally, peptide chain release factor 2 directs the termination of translation in response to the peptide chain termination codons UGA and UAA. The chain is Peptide chain release factor 2 from Escherichia coli O9:H4 (strain HS).